The sequence spans 346 residues: Dimethyladenosine transferase 1, mitochondrial (346 aa).

The transit peptide at 1-27 (MATQGVLAKYRLPPLPTIGEIIKLFNL) directs the protein to the mitochondrion. The S-adenosyl-L-methionine site is built by asparagine 36, leucine 38, glycine 63, glutamate 85, lysine 86, aspartate 111, isoleucine 112, and asparagine 141.

It belongs to the class I-like SAM-binding methyltransferase superfamily. rRNA adenine N(6)-methyltransferase family. KsgA subfamily.

It is found in the mitochondrion. The catalysed reaction is adenosine(N)/adenosine(N+1) in rRNA + 4 S-adenosyl-L-methionine = N(6)-dimethyladenosine(N)/N(6)-dimethyladenosine(N+1) in rRNA + 4 S-adenosyl-L-homocysteine + 4 H(+). Mitochondrial methyltransferase which uses S-adenosyl methionine to dimethylate two highly conserved adjacent adenosine residues (A1583 and A1584) within the loop of helix 45 at the 3-prime end of 12S rRNA, thereby regulating the assembly or stability of the small subunit of the mitochondrial ribosome. Also required for basal transcription of mitochondrial DNA, probably via its interaction with POLRMT and TFAM. Stimulates transcription independently of the methyltransferase activity. The polypeptide is Dimethyladenosine transferase 1, mitochondrial (tfb1m) (Xenopus tropicalis (Western clawed frog)).